Consider the following 128-residue polypeptide: Transcription antitermination protein NusB (128 aa).

This sequence belongs to the NusB family.

Involved in transcription antitermination. Required for transcription of ribosomal RNA (rRNA) genes. Binds specifically to the boxA antiterminator sequence of the ribosomal RNA (rrn) operons. This Listeria monocytogenes serotype 4a (strain HCC23) protein is Transcription antitermination protein NusB.